The primary structure comprises 478 residues: Aspartyl/glutamyl-tRNA(Asn/Gln) amidotransferase subunit B (478 aa).

The protein belongs to the GatB/GatE family. GatB subfamily. As to quaternary structure, heterotrimer of A, B and C subunits.

The catalysed reaction is L-glutamyl-tRNA(Gln) + L-glutamine + ATP + H2O = L-glutaminyl-tRNA(Gln) + L-glutamate + ADP + phosphate + H(+). It carries out the reaction L-aspartyl-tRNA(Asn) + L-glutamine + ATP + H2O = L-asparaginyl-tRNA(Asn) + L-glutamate + ADP + phosphate + 2 H(+). Allows the formation of correctly charged Asn-tRNA(Asn) or Gln-tRNA(Gln) through the transamidation of misacylated Asp-tRNA(Asn) or Glu-tRNA(Gln) in organisms which lack either or both of asparaginyl-tRNA or glutaminyl-tRNA synthetases. The reaction takes place in the presence of glutamine and ATP through an activated phospho-Asp-tRNA(Asn) or phospho-Glu-tRNA(Gln). This is Aspartyl/glutamyl-tRNA(Asn/Gln) amidotransferase subunit B from Syntrophotalea carbinolica (strain DSM 2380 / NBRC 103641 / GraBd1) (Pelobacter carbinolicus).